Reading from the N-terminus, the 426-residue chain is Enolase (426 aa).

(2R)-2-phosphoglycerate is bound at residue glutamine 163. Glutamate 205 functions as the Proton donor in the catalytic mechanism. Mg(2+) is bound by residues aspartate 242, glutamate 286, and aspartate 313. Residues lysine 338, arginine 367, serine 368, and lysine 389 each contribute to the (2R)-2-phosphoglycerate site. Lysine 338 functions as the Proton acceptor in the catalytic mechanism.

Belongs to the enolase family. It depends on Mg(2+) as a cofactor.

It localises to the cytoplasm. It is found in the secreted. The protein localises to the cell surface. The enzyme catalyses (2R)-2-phosphoglycerate = phosphoenolpyruvate + H2O. Its pathway is carbohydrate degradation; glycolysis; pyruvate from D-glyceraldehyde 3-phosphate: step 4/5. Catalyzes the reversible conversion of 2-phosphoglycerate (2-PG) into phosphoenolpyruvate (PEP). It is essential for the degradation of carbohydrates via glycolysis. The sequence is that of Enolase from Helicobacter pylori (strain G27).